Consider the following 239-residue polypeptide: Phosphoribosylaminoimidazole-succinocarboxamide synthase (239 aa).

The protein belongs to the SAICAR synthetase family.

The catalysed reaction is 5-amino-1-(5-phospho-D-ribosyl)imidazole-4-carboxylate + L-aspartate + ATP = (2S)-2-[5-amino-1-(5-phospho-beta-D-ribosyl)imidazole-4-carboxamido]succinate + ADP + phosphate + 2 H(+). It functions in the pathway purine metabolism; IMP biosynthesis via de novo pathway; 5-amino-1-(5-phospho-D-ribosyl)imidazole-4-carboxamide from 5-amino-1-(5-phospho-D-ribosyl)imidazole-4-carboxylate: step 1/2. This is Phosphoribosylaminoimidazole-succinocarboxamide synthase from Bacillus mycoides (strain KBAB4) (Bacillus weihenstephanensis).